Consider the following 399-residue polypeptide: Immunoglobulin heavy constant gamma 1 (399 aa).

Residues 1–21 (ASTKGPSVFPLAPSSKSTSGG) are disordered. The tract at residues 1-98 (ASTKGPSVFP…PSNTKVDKKV (98 aa)) is CH1. Topologically, residues 1–350 (ASTKGPSVFP…DGELDGLWTT (350 aa)) are extracellular. Ig-like domains lie at 6-99 (PSVF…KKVE), 121-220 (PSVF…KTIS), and 229-325 (PQVY…KSLS). A disulfide bridge links cysteine 27 with cysteine 83. Residues 99 to 110 (EPKSCDKTHTCP) form a hinge region. The tract at residues 111–223 (PCPAPELLGG…PIEKTISKAK (113 aa)) is CH2. 2 disulfides stabilise this stretch: cysteine 144-cysteine 204 and cysteine 250-cysteine 308. N-linked (GlcNAc...) (complex) asparagine glycosylation is present at asparagine 180. The CH3 stretch occupies residues 224–330 (GQPREPQVYT…QKSLSLSPEL (107 aa)). The chain crosses the membrane as a helical span at residues 351 to 371 (ITIFITLFLLSVCYSATVTFF). Topologically, residues 372–399 (KVKWIFSSVVDLKQTIIPDYRNMIGQGA) are cytoplasmic.

Immunoglobulins are composed of two identical heavy chains and two identical light chains; disulfide-linked. Interacts with FCGR1A; this interaction mediates IgG effector functions on monocytes. Interacts with FCGR2A and FCGR3A. Glycosylation on Asn-180 is required for interaction with Fc receptors and ability to activate the complement pathway. In terms of processing, (Microbial infection) Deglycosylation on Asn-180 by S.pyogenes EndoS or Endos2 endoglucosidases prevents interaction between immunoglobulin-gamma (IgG) and Fc receptors, impairing ability to activate the complement pathway.

Its subcellular location is the secreted. It localises to the cell membrane. Its function is as follows. Constant region of immunoglobulin heavy chains. Immunoglobulins, also known as antibodies, are membrane-bound or secreted glycoproteins produced by B lymphocytes. In the recognition phase of humoral immunity, the membrane-bound immunoglobulins serve as receptors which, upon binding of a specific antigen, trigger the clonal expansion and differentiation of B lymphocytes into immunoglobulins-secreting plasma cells. Secreted immunoglobulins mediate the effector phase of humoral immunity, which results in the elimination of bound antigens. The antigen binding site is formed by the variable domain of one heavy chain, together with that of its associated light chain. Thus, each immunoglobulin has two antigen binding sites with remarkable affinity for a particular antigen. The variable domains are assembled by a process called V-(D)-J rearrangement and can then be subjected to somatic hypermutations which, after exposure to antigen and selection, allow affinity maturation for a particular antigen. Mediates IgG effector functions on monocytes triggering ADCC of virus-infected cells. The chain is Immunoglobulin heavy constant gamma 1 from Homo sapiens (Human).